We begin with the raw amino-acid sequence, 407 residues long: Homeobox even-skipped homolog protein 1 (407 aa).

Disordered stretches follow at residues 29–120 (EAVG…SDFY) and 137–179 (EYQH…ACSA). The segment covering 102–114 (DSLSGQGQPSSSD) has biased composition (polar residues). The homeobox DNA-binding region spans 183–242 (MRRYRTAFTREQIARLEKEFYRENYVSRPRRCELAAALNLPETTIKVWFQNRRMKDKRQR).

This sequence belongs to the even-skipped homeobox family.

The protein resides in the nucleus. May play a role in the specification of neuronal cell types. This is Homeobox even-skipped homolog protein 1 (EVX1) from Homo sapiens (Human).